A 497-amino-acid polypeptide reads, in one-letter code: Glycerol kinase (497 aa).

Position 12 (threonine 12) interacts with ADP. ATP-binding residues include threonine 12, threonine 13, and serine 14. Threonine 12 is a binding site for sn-glycerol 3-phosphate. Arginine 16 is a binding site for ADP. Residues arginine 82, glutamate 83, tyrosine 133, and aspartate 243 each coordinate sn-glycerol 3-phosphate. The glycerol site is built by arginine 82, glutamate 83, tyrosine 133, aspartate 243, and glutamine 244. Residues threonine 265 and glycine 308 each contribute to the ADP site. The ATP site is built by threonine 265, glycine 308, glutamine 312, and glycine 409. Glycine 409 lines the ADP pocket.

This sequence belongs to the FGGY kinase family.

The catalysed reaction is glycerol + ATP = sn-glycerol 3-phosphate + ADP + H(+). Its pathway is polyol metabolism; glycerol degradation via glycerol kinase pathway; sn-glycerol 3-phosphate from glycerol: step 1/1. Its activity is regulated as follows. Inhibited by fructose 1,6-bisphosphate (FBP). In terms of biological role, key enzyme in the regulation of glycerol uptake and metabolism. Catalyzes the phosphorylation of glycerol to yield sn-glycerol 3-phosphate. This is Glycerol kinase from Dichelobacter nodosus (strain VCS1703A).